The following is a 180-amino-acid chain: Pro-glucagon (180 aa).

Positions 1-20 (MKTVYIVAGLFVMLVQGSWQ) are cleaved as a signal peptide. Residues 23–59 (PQDTEENARSFPASQTEPLEDPDQINEDKRHSQGTFT) are disordered. Ser54 carries the post-translational modification Phosphoserine. Residues 84–89 (NRNNIA) constitute a propeptide that is removed on maturation. Phosphoserine is present on residues Ser105 and Ser108. Arg127 is modified (arginine amide). Residues 131-145 (DFPEEVAIAEELGRR) constitute a propeptide that is removed on maturation. Residues Ser150 and Ser152 each carry the phosphoserine modification.

The protein belongs to the glucagon family. Post-translationally, proglucagon is post-translationally processed in a tissue-specific manner in pancreatic A cells and intestinal L cells. In pancreatic A cells, the major bioactive hormone is glucagon cleaved by PCSK2/PC2. In the intestinal L cells PCSK1/PC1 liberates GLP-1, GLP-2, glicentin and oxyntomodulin. GLP-1 is further N-terminally truncated by post-translational processing in the intestinal L cells resulting in GLP-1(7-37) GLP-1-(7-36)amide. The C-terminal amidation is neither important for the metabolism of GLP-1 nor for its effects on the endocrine pancreas. In terms of tissue distribution, glucagon is secreted in the A cells of the islets of Langerhans. GLP-1, GLP-2, oxyntomodulin and glicentin are secreted from enteroendocrine cells throughout the gastrointestinal tract.

The protein localises to the secreted. In terms of biological role, plays a key role in glucose metabolism and homeostasis. Regulates blood glucose by increasing gluconeogenesis and decreasing glycolysis. A counterregulatory hormone of insulin, raises plasma glucose levels in response to insulin-induced hypoglycemia. Plays an important role in initiating and maintaining hyperglycemic conditions in diabetes. Its function is as follows. Potent stimulator of glucose-dependent insulin release. Also stimulates insulin release in response to IL6. Plays important roles on gastric motility and the suppression of plasma glucagon levels. May be involved in the suppression of satiety and stimulation of glucose disposal in peripheral tissues, independent of the actions of insulin. Has growth-promoting activities on intestinal epithelium. May also regulate the hypothalamic pituitary axis (HPA) via effects on LH, TSH, CRH, oxytocin, and vasopressin secretion. Increases islet mass through stimulation of islet neogenesis and pancreatic beta cell proliferation. Inhibits beta cell apoptosis. Functionally, stimulates intestinal growth and up-regulates villus height in the small intestine, concomitant with increased crypt cell proliferation and decreased enterocyte apoptosis. The gastrointestinal tract, from the stomach to the colon is the principal target for GLP-2 action. Plays a key role in nutrient homeostasis, enhancing nutrient assimilation through enhanced gastrointestinal function, as well as increasing nutrient disposal. Stimulates intestinal glucose transport and decreases mucosal permeability. May modulate gastric acid secretion and the gastro-pyloro-duodenal activity. May play an important role in intestinal mucosal growth in the early period of life. In terms of biological role, oxyntomodulin significantly reduces food intake. This is Pro-glucagon (Gcg) from Rattus norvegicus (Rat).